The following is a 316-amino-acid chain: Beta-ketoacyl-[acyl-carrier-protein] synthase III 1 (316 aa).

Residues C112 and H243 contribute to the active site. The segment at 244-248 (QANYR) is ACP-binding. N273 is an active-site residue.

The protein belongs to the thiolase-like superfamily. FabH family. In terms of assembly, homodimer.

It is found in the cytoplasm. It carries out the reaction malonyl-[ACP] + acetyl-CoA + H(+) = 3-oxobutanoyl-[ACP] + CO2 + CoA. The protein operates within lipid metabolism; fatty acid biosynthesis. Its function is as follows. Catalyzes the condensation reaction of fatty acid synthesis by the addition to an acyl acceptor of two carbons from malonyl-ACP. Catalyzes the first condensation reaction which initiates fatty acid synthesis and may therefore play a role in governing the total rate of fatty acid production. Possesses both acetoacetyl-ACP synthase and acetyl transacylase activities. Its substrate specificity determines the biosynthesis of branched-chain and/or straight-chain of fatty acids. In Vibrio parahaemolyticus serotype O3:K6 (strain RIMD 2210633), this protein is Beta-ketoacyl-[acyl-carrier-protein] synthase III 1.